The sequence spans 81 residues: Photosystem I iron-sulfur center (81 aa).

2 consecutive 4Fe-4S ferredoxin-type domains span residues Met1–Trp31 and Ile39–Tyr68. [4Fe-4S] cluster-binding residues include Cys11, Cys14, Cys17, Cys21, Cys48, Cys51, Cys54, and Cys58.

As to quaternary structure, the cyanobacterial PSI reaction center is composed of one copy each of PsaA,B,C,D,E,F,I,J,K,L,M and X, and forms trimeric complexes. [4Fe-4S] cluster serves as cofactor.

The protein localises to the cellular thylakoid membrane. The catalysed reaction is reduced [plastocyanin] + hnu + oxidized [2Fe-2S]-[ferredoxin] = oxidized [plastocyanin] + reduced [2Fe-2S]-[ferredoxin]. Its function is as follows. Apoprotein for the two 4Fe-4S centers FA and FB of photosystem I (PSI); essential for photochemical activity. FB is the terminal electron acceptor of PSI, donating electrons to ferredoxin. The C-terminus interacts with PsaA/B/D and helps assemble the protein into the PSI complex. Required for binding of PsaD and PsaE to PSI. PSI is a plastocyanin/cytochrome c6-ferredoxin oxidoreductase, converting photonic excitation into a charge separation, which transfers an electron from the donor P700 chlorophyll pair to the spectroscopically characterized acceptors A0, A1, FX, FA and FB in turn. The chain is Photosystem I iron-sulfur center from Microcystis aeruginosa (strain NIES-843 / IAM M-2473).